The primary structure comprises 336 residues: Transcription initiation factor IIB (336 aa).

The TFIIB-type zinc finger occupies 41 to 72 (QKLRCPICGNTVFIEDAERGQIVCASCGYVLM). Residues Cys45, Cys48, Cys64, and Cys67 each coordinate Zn(2+). 2 tandem repeats follow at residues 152–235 (HELN…AREL) and 246–327 (QYVP…ELAK).

The protein belongs to the TFIIB family.

Its function is as follows. Stabilizes TBP binding to an archaeal box-A promoter. Also responsible for recruiting RNA polymerase II to the pre-initiation complex (DNA-TBP-TFIIB). The protein is Transcription initiation factor IIB of Caldivirga maquilingensis (strain ATCC 700844 / DSM 13496 / JCM 10307 / IC-167).